Reading from the N-terminus, the 456-residue chain is 3-isopropylmalate dehydratase large subunit (456 aa).

[4Fe-4S] cluster-binding residues include Cys-336, Cys-396, and Cys-399.

Belongs to the aconitase/IPM isomerase family. LeuC type 1 subfamily. As to quaternary structure, heterodimer of LeuC and LeuD. It depends on [4Fe-4S] cluster as a cofactor.

The enzyme catalyses (2R,3S)-3-isopropylmalate = (2S)-2-isopropylmalate. Its pathway is amino-acid biosynthesis; L-leucine biosynthesis; L-leucine from 3-methyl-2-oxobutanoate: step 2/4. Catalyzes the isomerization between 2-isopropylmalate and 3-isopropylmalate, via the formation of 2-isopropylmaleate. In Staphylococcus aureus (strain JH1), this protein is 3-isopropylmalate dehydratase large subunit.